Here is an 863-residue protein sequence, read N- to C-terminus: Paramyosin (863 aa).

Positions 1 to 18 (MSESHVKISRTIIRGTSP) are nonhelical region. Residues 19-836 (STVRLESRVR…ERTITIKRTI (818 aa)) adopt a coiled-coil conformation. The segment at 837–863 (GGPGSRAVSVVREINSVSRGNRATSIM) is nonhelical region.

It belongs to the paramyosin family. As to quaternary structure, homodimer.

Its subcellular location is the cytoplasm. It localises to the myofibril. In terms of biological role, paramyosin is a major structural component of many thick filaments isolated from invertebrate muscles. The polypeptide is Paramyosin (PMY) (Taenia saginata (Beef tapeworm)).